Consider the following 701-residue polypeptide: CRS2-associated factor 1, chloroplastic (701 aa).

Residues 1-77 (MATSHLTSRS…ENGEPAAGVR (77 aa)) constitute a chloroplast transit peptide. CRM domains are found at residues 183-279 (EPLT…TRPI) and 301-397 (DGLT…LPPL). The interval 581–603 (GILLLFKQAIDSGMALVLNENEF) is CRS2 binding.

Interacts with CRS2 and RNA. Part of large ribonucleo-protein complexes that include group IIB introns, CRS2 and CAF1.

The protein resides in the plastid. It is found in the chloroplast stroma. In terms of biological role, required for the splicing of group IIB introns in chloroplasts. Forms splicing particles with CRS2. Interacts with RNA and confers intron specificity of the splicing particles. The chain is CRS2-associated factor 1, chloroplastic from Oryza sativa subsp. japonica (Rice).